The primary structure comprises 231 residues: ATP phosphoribosyltransferase (231 aa).

Belongs to the ATP phosphoribosyltransferase family. Short subfamily. In terms of assembly, heteromultimer composed of HisG and HisZ subunits.

It localises to the cytoplasm. It carries out the reaction 1-(5-phospho-beta-D-ribosyl)-ATP + diphosphate = 5-phospho-alpha-D-ribose 1-diphosphate + ATP. It functions in the pathway amino-acid biosynthesis; L-histidine biosynthesis; L-histidine from 5-phospho-alpha-D-ribose 1-diphosphate: step 1/9. Functionally, catalyzes the condensation of ATP and 5-phosphoribose 1-diphosphate to form N'-(5'-phosphoribosyl)-ATP (PR-ATP). Has a crucial role in the pathway because the rate of histidine biosynthesis seems to be controlled primarily by regulation of HisG enzymatic activity. This Rhizobium etli (strain CIAT 652) protein is ATP phosphoribosyltransferase (hisG).